The following is a 337-amino-acid chain: 3-isopropylmalate dehydrogenase (337 aa).

4 residues coordinate substrate: Arg-86, Arg-96, Arg-117, and Asp-201. Positions 201, 225, and 229 each coordinate Mg(2+). Residue Gly-258–Asn-270 participates in NAD(+) binding.

It belongs to the isocitrate and isopropylmalate dehydrogenases family. As to quaternary structure, homotetramer. Mg(2+) is required as a cofactor. Mn(2+) serves as cofactor.

The protein resides in the cytoplasm. It catalyses the reaction (2R,3S)-3-isopropylmalate + NAD(+) = 4-methyl-2-oxopentanoate + CO2 + NADH. The protein operates within amino-acid biosynthesis; L-leucine biosynthesis; L-leucine from 3-methyl-2-oxobutanoate: step 3/4. In terms of biological role, catalyzes the oxidation of 3-carboxy-2-hydroxy-4-methylpentanoate (3-isopropylmalate) to 3-carboxy-4-methyl-2-oxopentanoate. The product decarboxylates to 4-methyl-2 oxopentanoate. This is 3-isopropylmalate dehydrogenase (leuB) from Sulfurisphaera tokodaii (strain DSM 16993 / JCM 10545 / NBRC 100140 / 7) (Sulfolobus tokodaii).